We begin with the raw amino-acid sequence, 228 residues long: Orotidine 5'-phosphate decarboxylase (228 aa).

Substrate contacts are provided by residues Asp-10, Lys-33, 60 to 69 (DLKLYDIPHT), Thr-116, Arg-178, Gln-187, Gly-207, and Arg-208. Catalysis depends on Lys-62, which acts as the Proton donor.

It belongs to the OMP decarboxylase family. Type 1 subfamily. As to quaternary structure, homodimer.

It catalyses the reaction orotidine 5'-phosphate + H(+) = UMP + CO2. The protein operates within pyrimidine metabolism; UMP biosynthesis via de novo pathway; UMP from orotate: step 2/2. Catalyzes the decarboxylation of orotidine 5'-monophosphate (OMP) to uridine 5'-monophosphate (UMP). The chain is Orotidine 5'-phosphate decarboxylase from Oenococcus oeni (strain ATCC BAA-331 / PSU-1).